We begin with the raw amino-acid sequence, 454 residues long: Mitochondrial distribution and morphology protein 10 (454 aa).

The protein belongs to the MDM10 family. Component of the ER-mitochondria encounter structure (ERMES) or MDM complex, composed of MMM1, MDM10, MDM12 and MDM34. Associates with the mitochondrial outer membrane sorting assembly machinery SAM(core) complex.

Its subcellular location is the mitochondrion outer membrane. In terms of biological role, component of the ERMES/MDM complex, which serves as a molecular tether to connect the endoplasmic reticulum and mitochondria. Components of this complex are involved in the control of mitochondrial shape and protein biogenesis and may function in phospholipid exchange. MDM10 is involved in the late assembly steps of the general translocase of the mitochondrial outer membrane (TOM complex). Functions in the TOM40-specific route of the assembly of outer membrane beta-barrel proteins, including the association of TOM40 with the receptor TOM22 and small TOM proteins. Can associate with the SAM(core) complex as well as the MDM12-MMM1 complex, both involved in late steps of the major beta-barrel assembly pathway, that is responsible for biogenesis of all outer membrane beta-barrel proteins. May act as a switch that shuttles between both complexes and channels precursor proteins into the TOM40-specific pathway. Plays a role in mitochondrial morphology and in the inheritance of mitochondria. This chain is Mitochondrial distribution and morphology protein 10, found in Candida tropicalis (strain ATCC MYA-3404 / T1) (Yeast).